The primary structure comprises 368 residues: Large ribosomal subunit protein mL46 (368 aa).

Residues 53-81 (TATATTTTTLPPPHPPVTTSTGTHAATST) are disordered. Positions 69–81 (VTTSTGTHAATST) are enriched in low complexity.

This sequence belongs to the mitochondrion-specific ribosomal protein mL46 family. Component of the mitochondrial large ribosomal subunit (mt-LSU). Mature N.crassa 74S mitochondrial ribosomes consist of a small (37S) and a large (54S) subunit. The 37S small subunit contains a 16S ribosomal RNA (16S mt-rRNA) and 32 different proteins. The 54S large subunit contains a 23S rRNA (23S mt-rRNA) and 42 different proteins.

The protein localises to the mitochondrion. Component of the mitochondrial ribosome (mitoribosome), a dedicated translation machinery responsible for the synthesis of mitochondrial genome-encoded proteins, including at least some of the essential transmembrane subunits of the mitochondrial respiratory chain. The mitoribosomes are attached to the mitochondrial inner membrane and translation products are cotranslationally integrated into the membrane. This is Large ribosomal subunit protein mL46 (mrpl17) from Neurospora crassa (strain ATCC 24698 / 74-OR23-1A / CBS 708.71 / DSM 1257 / FGSC 987).